The sequence spans 131 residues: Small ribosomal subunit protein bS6 (131 aa).

The tract at residues 99–131 is disordered; it reads ASPMVKAKDERRERREDFATETNEDSDAGDSEE. The segment covering 104–116 has biased composition (basic and acidic residues); sequence KAKDERRERREDF. Residues 120 to 131 show a composition bias toward acidic residues; that stretch reads TNEDSDAGDSEE.

It belongs to the bacterial ribosomal protein bS6 family.

In terms of biological role, binds together with bS18 to 16S ribosomal RNA. This chain is Small ribosomal subunit protein bS6, found in Sodalis glossinidius (strain morsitans).